Here is a 247-residue protein sequence, read N- to C-terminus: uncharacterized protein (247 aa).

The next 3 helical transmembrane spans lie at 108–128 (WYIN…FLII), 136–156 (IFSV…NIIC), and 194–214 (GAKL…LFFI).

It is found in the membrane. This is an uncharacterized protein from Caenorhabditis elegans.